Reading from the N-terminus, the 533-residue chain is D-3-phosphoglycerate dehydrogenase (533 aa).

The residue at position 2 (A2) is an N-acetylalanine. Phosphoserine is present on S14. Residue K21 is modified to N6-acetyllysine; alternate. K21 is covalently cross-linked (Glycyl lysine isopeptide (Lys-Gly) (interchain with G-Cter in SUMO1); alternate). K21 participates in a covalent cross-link: Glycyl lysine isopeptide (Lys-Gly) (interchain with G-Cter in SUMO2); alternate. K58 is subject to N6-acetyllysine. Residues T78, 155–156 (RI), D175, T207, 234–236 (CAR), and D260 each bind NAD(+). T78 carries the phosphothreonine modification. R236 is a catalytic residue. E265 is an active-site residue. H283 serves as the catalytic Proton donor. 283–286 (HLGA) provides a ligand contact to NAD(+).

Belongs to the D-isomer specific 2-hydroxyacid dehydrogenase family. In terms of assembly, homotetramer. In terms of tissue distribution, liver, kidney, brain, testis.

It carries out the reaction (2R)-3-phosphoglycerate + NAD(+) = 3-phosphooxypyruvate + NADH + H(+). The protein operates within amino-acid biosynthesis; L-serine biosynthesis; L-serine from 3-phospho-D-glycerate: step 1/3. Catalyzes the reversible oxidation of 3-phospho-D-glycerate to 3-phosphonooxypyruvate, the first step of the phosphorylated L-serine biosynthesis pathway. Does not catalyze the reversible oxidation of 2-hydroxyglutarate to 2-oxoglutarate and the reversible oxidation of (S)-malate to oxaloacetate. This Rattus norvegicus (Rat) protein is D-3-phosphoglycerate dehydrogenase (Phgdh).